The chain runs to 258 residues: MLAKRIIPCLDVRDGQVVKGVQFRNHEIIGDIVPLAKRYAEEGADELVFYDITASSDGRVVDKSWVSRVAEVIDIPFCVAGGIKSLEDAAKILSFGADKISINSPALADPTLITRLADRFGVQCIVVGIDTWYDGETGKYHVNQYTGDESRTRVTQWETLDWVEEVQKRGAGEIVLNMMNQDGVRNGYDLEQLKKVREVCHVPLIASGGAGTMEHFLEAFRDADVDGALAASVFHKQIINIGELKAYLATQGVEIRIC.

Active-site residues include Asp-11 and Asp-130.

The protein belongs to the HisA/HisF family. As to quaternary structure, heterodimer of HisH and HisF.

Its subcellular location is the cytoplasm. The catalysed reaction is 5-[(5-phospho-1-deoxy-D-ribulos-1-ylimino)methylamino]-1-(5-phospho-beta-D-ribosyl)imidazole-4-carboxamide + L-glutamine = D-erythro-1-(imidazol-4-yl)glycerol 3-phosphate + 5-amino-1-(5-phospho-beta-D-ribosyl)imidazole-4-carboxamide + L-glutamate + H(+). Its pathway is amino-acid biosynthesis; L-histidine biosynthesis; L-histidine from 5-phospho-alpha-D-ribose 1-diphosphate: step 5/9. IGPS catalyzes the conversion of PRFAR and glutamine to IGP, AICAR and glutamate. The HisF subunit catalyzes the cyclization activity that produces IGP and AICAR from PRFAR using the ammonia provided by the HisH subunit. This Escherichia coli (strain ATCC 8739 / DSM 1576 / NBRC 3972 / NCIMB 8545 / WDCM 00012 / Crooks) protein is Imidazole glycerol phosphate synthase subunit HisF.